A 124-amino-acid polypeptide reads, in one-letter code: Insulin growth factor-like family member 4 (124 aa).

The first 19 residues, 1–19 (MVPRISAAIFIFELLGSNS), serve as a signal peptide directing secretion. Residues Asn57 and Asn84 are each glycosylated (N-linked (GlcNAc...) asparagine).

Belongs to the IGFL family. In terms of tissue distribution, detected in the cerebellum.

The protein localises to the secreted. In Homo sapiens (Human), this protein is Insulin growth factor-like family member 4 (IGFL4).